Here is a 316-residue protein sequence, read N- to C-terminus: 33 kDa chaperonin (316 aa).

Intrachain disulfides connect cysteine 239/cysteine 241 and cysteine 272/cysteine 275.

Belongs to the HSP33 family. In terms of processing, under oxidizing conditions two disulfide bonds are formed involving the reactive cysteines. Under reducing conditions zinc is bound to the reactive cysteines and the protein is inactive.

The protein resides in the cytoplasm. In terms of biological role, redox regulated molecular chaperone. Protects both thermally unfolding and oxidatively damaged proteins from irreversible aggregation. Plays an important role in the bacterial defense system toward oxidative stress. The chain is 33 kDa chaperonin from Clostridium perfringens (strain SM101 / Type A).